The chain runs to 227 residues: ATP synthase F(0) complex subunit a (227 aa).

6 helical membrane-spanning segments follow: residues 12–32 (PYLMGMPLILPSLLLPTLLFP), 69–89 (WALLLTSLILLLLSINLMGLL), 98–118 (QLSMNMALAFPLWLATLLIGL), 139–159 (IPILIMIETTSLLIRPLALGV), 170–190 (LLIQLISTATIALLPTMPSIS), and 196–216 (ILLLLTILEVAVAMIQAYVFV).

Belongs to the ATPase A chain family. Component of the ATP synthase complex composed at least of ATP5F1A/subunit alpha, ATP5F1B/subunit beta, ATP5MC1/subunit c (homooctomer), MT-ATP6/subunit a, MT-ATP8/subunit 8, ATP5ME/subunit e, ATP5MF/subunit f, ATP5MG/subunit g, ATP5MK/subunit k, ATP5MJ/subunit j, ATP5F1C/subunit gamma, ATP5F1D/subunit delta, ATP5F1E/subunit epsilon, ATP5PF/subunit F6, ATP5PB/subunit b, ATP5PD/subunit d, ATP5PO/subunit OSCP. ATP synthase complex consists of a soluble F(1) head domain (subunits alpha(3) and beta(3)) - the catalytic core - and a membrane F(0) domain - the membrane proton channel (subunits c, a, 8, e, f, g, k and j). These two domains are linked by a central stalk (subunits gamma, delta, and epsilon) rotating inside the F1 region and a stationary peripheral stalk (subunits F6, b, d, and OSCP). Interacts with DNAJC30; interaction is direct.

Its subcellular location is the mitochondrion inner membrane. The catalysed reaction is H(+)(in) = H(+)(out). In terms of biological role, subunit a, of the mitochondrial membrane ATP synthase complex (F(1)F(0) ATP synthase or Complex V) that produces ATP from ADP in the presence of a proton gradient across the membrane which is generated by electron transport complexes of the respiratory chain. ATP synthase complex consist of a soluble F(1) head domain - the catalytic core - and a membrane F(1) domain - the membrane proton channel. These two domains are linked by a central stalk rotating inside the F(1) region and a stationary peripheral stalk. During catalysis, ATP synthesis in the catalytic domain of F(1) is coupled via a rotary mechanism of the central stalk subunits to proton translocation. With the subunit c (ATP5MC1), forms the proton-conducting channel in the F(0) domain, that contains two crucial half-channels (inlet and outlet) that facilitate proton movement from the mitochondrial intermembrane space (IMS) into the matrix. Protons are taken up via the inlet half-channel and released through the outlet half-channel, following a Grotthuss mechanism. In Coturnix japonica (Japanese quail), this protein is ATP synthase F(0) complex subunit a.